Reading from the N-terminus, the 45-residue chain is Photosystem II reaction center protein K (45 aa).

Positions 1 to 8 (MEGILFLA) are excised as a propeptide. A helical membrane pass occupies residues 24 to 44 (APVIPVFFLLLAFVWQAAVGF).

This sequence belongs to the PsbK family. In terms of assembly, PSII is composed of 1 copy each of membrane proteins PsbA, PsbB, PsbC, PsbD, PsbE, PsbF, PsbH, PsbI, PsbJ, PsbK, PsbL, PsbM, PsbT, PsbX, PsbY, PsbZ, Psb30/Ycf12, at least 3 peripheral proteins of the oxygen-evolving complex and a large number of cofactors. It forms dimeric complexes.

It is found in the plastid. The protein localises to the chloroplast thylakoid membrane. Functionally, one of the components of the core complex of photosystem II (PSII). PSII is a light-driven water:plastoquinone oxidoreductase that uses light energy to abstract electrons from H(2)O, generating O(2) and a proton gradient subsequently used for ATP formation. It consists of a core antenna complex that captures photons, and an electron transfer chain that converts photonic excitation into a charge separation. This chain is Photosystem II reaction center protein K, found in Guillardia theta (Cryptophyte).